The sequence spans 420 residues: Structure-specific endonuclease subunit SLX1 homolog (420 aa).

One can recognise a GIY-YIG domain in the interval 19–106; it reads SSDNTYPWQN…QHPLKSRRLR (88 aa). Disordered regions lie at residues 237-306 and 311-330; these read SVEE…AAVN and DDSA…DDVA. Low complexity predominate over residues 247-266; that stretch reads PSSCSVPPSTGSSAAPTPGA. A compositionally biased stretch (basic and acidic residues) spans 279–301; sequence VDPRLDSDDRDDNHQFESPDNHE. Acidic residues predominate over residues 311 to 327; it reads DDSADDGTTDGNEDGPD. An SLX1-type zinc finger spans residues 348–405; it reads CGHCHQSVYQELCIVCLNATCTYRAHLLCAAQAAVHPLGQSSPSETRLVPLRHSCPRC.

It belongs to the SLX1 family. As to quaternary structure, forms a heterodimer with a member of the SLX4 family. A divalent metal cation is required as a cofactor.

It is found in the nucleus. Functionally, catalytic subunit of a heterodimeric structure-specific endonuclease that resolves DNA secondary structures generated during DNA repair and recombination. Has endonuclease activity towards branched DNA substrates, introducing single-strand cuts in duplex DNA close to junctions with ss-DNA. The polypeptide is Structure-specific endonuclease subunit SLX1 homolog (Monosiga brevicollis (Choanoflagellate)).